We begin with the raw amino-acid sequence, 88 residues long: uncharacterized protein (88 aa).

The next 2 helical transmembrane spans lie at 8 to 28 (IFLS…SIFF) and 45 to 65 (ELLR…VINL).

It is found in the membrane. This is an uncharacterized protein from Saccharomyces cerevisiae (strain ATCC 204508 / S288c) (Baker's yeast).